Consider the following 316-residue polypeptide: Acetyl-coenzyme A carboxylase carboxyl transferase subunit alpha (316 aa).

Residues 40–293 form the CoA carboxyltransferase C-terminal domain; sequence LEKRSRDALR…GDLIAKTMKE (254 aa).

The protein belongs to the AccA family. Acetyl-CoA carboxylase is a heterohexamer composed of biotin carboxyl carrier protein (AccB), biotin carboxylase (AccC) and two subunits each of ACCase subunit alpha (AccA) and ACCase subunit beta (AccD).

Its subcellular location is the cytoplasm. It catalyses the reaction N(6)-carboxybiotinyl-L-lysyl-[protein] + acetyl-CoA = N(6)-biotinyl-L-lysyl-[protein] + malonyl-CoA. It participates in lipid metabolism; malonyl-CoA biosynthesis; malonyl-CoA from acetyl-CoA: step 1/1. In terms of biological role, component of the acetyl coenzyme A carboxylase (ACC) complex. First, biotin carboxylase catalyzes the carboxylation of biotin on its carrier protein (BCCP) and then the CO(2) group is transferred by the carboxyltransferase to acetyl-CoA to form malonyl-CoA. The polypeptide is Acetyl-coenzyme A carboxylase carboxyl transferase subunit alpha (Mesorhizobium japonicum (strain LMG 29417 / CECT 9101 / MAFF 303099) (Mesorhizobium loti (strain MAFF 303099))).